We begin with the raw amino-acid sequence, 202 residues long: NADH-quinone oxidoreductase subunit B (202 aa).

Residues M1–S13 show a composition bias toward polar residues. Residues M1–T32 are disordered. Positions 81, 82, 146, and 176 each coordinate [4Fe-4S] cluster.

Belongs to the complex I 20 kDa subunit family. In terms of assembly, NDH-1 is composed of 14 different subunits. Subunits NuoB, C, D, E, F, and G constitute the peripheral sector of the complex. [4Fe-4S] cluster serves as cofactor.

It is found in the cell inner membrane. It carries out the reaction a quinone + NADH + 5 H(+)(in) = a quinol + NAD(+) + 4 H(+)(out). NDH-1 shuttles electrons from NADH, via FMN and iron-sulfur (Fe-S) centers, to quinones in the respiratory chain. The immediate electron acceptor for the enzyme in this species is believed to be ubiquinone. Couples the redox reaction to proton translocation (for every two electrons transferred, four hydrogen ions are translocated across the cytoplasmic membrane), and thus conserves the redox energy in a proton gradient. The sequence is that of NADH-quinone oxidoreductase subunit B from Nitrobacter hamburgensis (strain DSM 10229 / NCIMB 13809 / X14).